Consider the following 187-residue polypeptide: Meiotically up-regulated gene 155 protein (187 aa).

A disordered region spans residues 1–24 (MRPTSGCSKDDTIQKQNRRHNTVD). 2 consecutive transmembrane segments (helical) span residues 83 to 105 (IISY…PFSH) and 163 to 183 (VMLT…LFIF).

The protein localises to the cytoplasm. It is found in the nucleus membrane. Its function is as follows. Has a role in meiosis. The sequence is that of Meiotically up-regulated gene 155 protein (mug155) from Schizosaccharomyces pombe (strain 972 / ATCC 24843) (Fission yeast).